A 310-amino-acid polypeptide reads, in one-letter code: ADP-L-glycero-D-manno-heptose-6-epimerase (310 aa).

NADP(+) contacts are provided by residues 10–11 (FI), 31–32 (DN), Lys38, Lys53, 75–79 (EGACS), and Asn92. Tyr140 functions as the Proton acceptor in the catalytic mechanism. Lys144 serves as a coordination point for NADP(+). A substrate-binding site is contributed by Asn169. Residues Val170 and Lys178 each contribute to the NADP(+) site. The Proton acceptor role is filled by Lys178. Substrate is bound by residues Ser180, His187, 201 to 204 (FSGS), Arg209, and Tyr272.

Belongs to the NAD(P)-dependent epimerase/dehydratase family. HldD subfamily. In terms of assembly, homopentamer. NADP(+) is required as a cofactor.

The catalysed reaction is ADP-D-glycero-beta-D-manno-heptose = ADP-L-glycero-beta-D-manno-heptose. It functions in the pathway nucleotide-sugar biosynthesis; ADP-L-glycero-beta-D-manno-heptose biosynthesis; ADP-L-glycero-beta-D-manno-heptose from D-glycero-beta-D-manno-heptose 7-phosphate: step 4/4. Functionally, catalyzes the interconversion between ADP-D-glycero-beta-D-manno-heptose and ADP-L-glycero-beta-D-manno-heptose via an epimerization at carbon 6 of the heptose. This Pectobacterium atrosepticum (strain SCRI 1043 / ATCC BAA-672) (Erwinia carotovora subsp. atroseptica) protein is ADP-L-glycero-D-manno-heptose-6-epimerase.